The primary structure comprises 261 residues: 3-hydroxyacyl-CoA dehydrogenase type-2 (261 aa).

Position 2 is an N-acetylalanine (A2). NAD(+) is bound by residues S20, L22, and D41. Residue K53 is modified to N6-acetyllysine; alternate. N6-succinyllysine; alternate is present on K53. Residues D64 and V65 each contribute to the NAD(+) site. An N6-acetyllysine modification is found at K69. C91 is an NAD(+) binding site. An N6-acetyllysine mark is found at K99 and K105. S155 is a substrate binding site. Positions 168, 172, 201, and 203 each coordinate NAD(+). Catalysis depends on Y168, which acts as the Proton acceptor. K212 is modified (N6-acetyllysine; alternate). At K212 the chain carries N6-succinyllysine; alternate.

The protein belongs to the short-chain dehydrogenases/reductases (SDR) family. As to quaternary structure, homotetramer. Component of mitochondrial ribonuclease P, a complex composed of TRMT10C/MRPP1, HSD17B10/MRPP2 and PRORP/MRPP3. Interacts with TRMT10C/MRPP1; forming the MRPP1-MRPP2 subcomplex of the mitochondrial ribonuclease P complex.

The protein resides in the mitochondrion. Its subcellular location is the mitochondrion matrix. It localises to the mitochondrion nucleoid. The enzyme catalyses a (3S)-3-hydroxyacyl-CoA + NAD(+) = a 3-oxoacyl-CoA + NADH + H(+). It catalyses the reaction (2S,3S)-3-hydroxy-2-methylbutanoyl-CoA + NAD(+) = 2-methyl-3-oxobutanoyl-CoA + NADH + H(+). The catalysed reaction is testosterone + NAD(+) = androst-4-ene-3,17-dione + NADH + H(+). It carries out the reaction 5alpha-androstane-3alpha,17beta-diol + NAD(+) = 17beta-hydroxy-5alpha-androstan-3-one + NADH + H(+). The enzyme catalyses 17beta-estradiol + NAD(+) = estrone + NADH + H(+). It catalyses the reaction cholate + NAD(+) = 3alpha,12alpha-dihydroxy-7-oxo-5beta-cholanate + NADH + H(+). The catalysed reaction is (3S)-3-hydroxybutanoyl-CoA + NAD(+) = acetoacetyl-CoA + NADH + H(+). It carries out the reaction (3S)-hydroxyoctanoyl-CoA + NAD(+) = 3-oxooctanoyl-CoA + NADH + H(+). The enzyme catalyses (3S)-hydroxyhexadecanoyl-CoA + NAD(+) = 3-oxohexadecanoyl-CoA + NADH + H(+). It catalyses the reaction 17beta-hydroxy-5alpha-androstan-3-one + NAD(+) = 5alpha-androstan-3,17-dione + NADH + H(+). The catalysed reaction is 5alpha-pregnan-20beta-ol-3-one + NAD(+) = 5alpha-pregnane-3,20-dione + NADH + H(+). It carries out the reaction 3alpha-hydroxy-5alpha-pregnan-20-one + NAD(+) = 5alpha-pregnane-3,20-dione + NADH + H(+). The enzyme catalyses cortisone + NAD(+) = 17alpha-hydroxypregn-4-en-3,11,20-trione-21-al + NADH + H(+). It catalyses the reaction 11-dehydrocorticosterone + NAD(+) = pregn-4-ene-3,11,20,21-tetraone + NADH + H(+). The catalysed reaction is cortisol + NAD(+) = 11beta,17alpha-dihydroxypregn-4-ene-3,20,21-trione + NADH + H(+). It carries out the reaction chenodeoxycholate + NAD(+) = 7-oxolithocholate + NADH + H(+). The enzyme catalyses ursodeoxycholate + NAD(+) = 7-oxolithocholate + NADH + H(+). It catalyses the reaction 3beta,7beta-dihydroxy-5beta-cholan-24-oate + NAD(+) = 3beta-hydroxy-7-oxo-5beta-cholan-24-oate + NADH + H(+). Its pathway is amino-acid degradation; L-isoleucine degradation. It participates in lipid metabolism; fatty acid beta-oxidation. The protein operates within steroid metabolism. It functions in the pathway lipid metabolism; bile acid biosynthesis. Mitochondrial dehydrogenase involved in pathways of fatty acid, branched-chain amino acid and steroid metabolism. Acts as (S)-3-hydroxyacyl-CoA dehydrogenase in mitochondrial fatty acid beta-oxidation, a major degradation pathway of fatty acids. Catalyzes the third step in the beta-oxidation cycle, namely the reversible conversion of (S)-3-hydroxyacyl-CoA to 3-ketoacyl-CoA. Preferentially accepts straight medium- and short-chain acyl-CoA substrates with highest efficiency for (3S)-hydroxybutanoyl-CoA. Acts as 3-hydroxy-2-methylbutyryl-CoA dehydrogenase in branched-chain amino acid catabolic pathway. Catalyzes the oxidation of 3-hydroxy-2-methylbutanoyl-CoA into 2-methyl-3-oxobutanoyl-CoA, a step in isoleucine degradation pathway. Has hydroxysteroid dehydrogenase activity toward steroid hormones and bile acids. Catalyzes the oxidation of 3alpha-, 17beta-, 20beta- and 21-hydroxysteroids and 7alpha- and 7beta-hydroxy bile acids. Oxidizes allopregnanolone/brexanolone at the 3alpha-hydroxyl group, which is known to be critical for the activation of gamma-aminobutyric acid receptors (GABAARs) chloride channel. Has phospholipase C-like activity toward cardiolipin and its oxidized species. Likely oxidizes the 2'-hydroxyl in the head group of cardiolipin to form a ketone intermediate that undergoes nucleophilic attack by water and fragments into diacylglycerol, dihydroxyacetone and orthophosphate. Has higher affinity for cardiolipin with oxidized fatty acids and may degrade these species during the oxidative stress response to protect cells from apoptosis. By interacting with intracellular amyloid-beta, it may contribute to the neuronal dysfunction associated with Alzheimer disease (AD). Essential for structural and functional integrity of mitochondria. Its function is as follows. In addition to mitochondrial dehydrogenase activity, moonlights as a component of mitochondrial ribonuclease P, a complex that cleaves tRNA molecules in their 5'-ends. Together with TRMT10C/MRPP1, forms a subcomplex of the mitochondrial ribonuclease P, named MRPP1-MRPP2 subcomplex, which displays functions that are independent of the ribonuclease P activity. The MRPP1-MRPP2 subcomplex catalyzes the formation of N(1)-methylguanine and N(1)-methyladenine at position 9 (m1G9 and m1A9, respectively) in tRNAs; HSD17B10/MRPP2 acting as a non-catalytic subunit. The MRPP1-MRPP2 subcomplex also acts as a tRNA maturation platform: following 5'-end cleavage by the mitochondrial ribonuclease P complex, the MRPP1-MRPP2 subcomplex enhances the efficiency of 3'-processing catalyzed by ELAC2, retains the tRNA product after ELAC2 processing and presents the nascent tRNA to the mitochondrial CCA tRNA nucleotidyltransferase TRNT1 enzyme. Associates with mitochondrial DNA complexes at the nucleoids to initiate RNA processing and ribosome assembly. The chain is 3-hydroxyacyl-CoA dehydrogenase type-2 (HSD17B10) from Bos taurus (Bovine).